Here is a 590-residue protein sequence, read N- to C-terminus: TPR repeat-containing protein PA4667 (590 aa).

TPR repeat units lie at residues 235–268 (VAPL…HPDD), 269–302 (KRVR…FPDD), 370–403 (LPAQ…QPDY), 405–438 (IQLY…YPED), and 508–541 (PAIL…YPDH).

The chain is TPR repeat-containing protein PA4667 from Pseudomonas aeruginosa (strain ATCC 15692 / DSM 22644 / CIP 104116 / JCM 14847 / LMG 12228 / 1C / PRS 101 / PAO1).